Here is a 298-residue protein sequence, read N- to C-terminus: Inosose dehydratase (298 aa).

It belongs to the IolE/MocC family. Glutathione is required as a cofactor. Co(2+) serves as cofactor. It depends on Mn(2+) as a cofactor.

It catalyses the reaction scyllo-inosose = 3D-3,5/4-trihydroxycyclohexane-1,2-dione + H2O. In terms of biological role, catalyzes the dehydration of inosose (2-keto-myo-inositol, 2KMI or 2,4,6/3,5-pentahydroxycyclohexanone) to 3D-(3,5/4)-trihydroxycyclohexane-1,2-dione (D-2,3-diketo-4-deoxy-epi-inositol). This is Inosose dehydratase from Glaesserella parasuis serovar 5 (strain SH0165) (Haemophilus parasuis).